Here is a 122-residue protein sequence, read N- to C-terminus: MTAATRQEVLCLYRSIFRLARKWQAASGQMEDTIEEKQYILKEARTLFQKNKNLTDPELIKQCIVECTARIEIGLHYQIPYPRPIHLPPMGLTARRGRGLQTQEKLRKLSKPVYLKSHDEVS.

Belongs to the complex I LYR family.

Its function is as follows. May promote cell proliferation and inhibition of apoptosis of preadipocytes. In Mus musculus (Mouse), this protein is LYR motif-containing protein 1 (Lyrm1).